The chain runs to 466 residues: Phosphomethylpyrimidine synthase (466 aa).

Residues N80, M109, Y139, H175, S195–G197, D236–R239, and E275 contribute to the substrate site. Residue H279 coordinates Zn(2+). Position 302 (Y302) interacts with substrate. H343 contributes to the Zn(2+) binding site. Positions 423, 426, and 431 each coordinate [4Fe-4S] cluster.

This sequence belongs to the ThiC family. It depends on [4Fe-4S] cluster as a cofactor.

It carries out the reaction 5-amino-1-(5-phospho-beta-D-ribosyl)imidazole + S-adenosyl-L-methionine = 4-amino-2-methyl-5-(phosphooxymethyl)pyrimidine + CO + 5'-deoxyadenosine + formate + L-methionine + 3 H(+). Its pathway is cofactor biosynthesis; thiamine diphosphate biosynthesis. Functionally, catalyzes the synthesis of the hydroxymethylpyrimidine phosphate (HMP-P) moiety of thiamine from aminoimidazole ribotide (AIR) in a radical S-adenosyl-L-methionine (SAM)-dependent reaction. This Prochlorococcus marinus (strain NATL1A) protein is Phosphomethylpyrimidine synthase.